The sequence spans 320 residues: UPF0053 protein in cps region (320 aa).

Residues 4–24 form a helical membrane-spanning segment; the sequence is CLSFLLMIGFSLIAEGFSFII. CBS domains follow at residues 121-183 and 186-244; these read MTSR…PLDL and LVRQ…PNEV.

Belongs to the UPF0053 family.

It localises to the cell membrane. This chain is UPF0053 protein in cps region, found in Klebsiella pneumoniae.